A 1055-amino-acid chain; its full sequence is Bifunctional fucokinase/GDP-fucose pyrophosphorylase (1055 aa).

Residues 34 to 565 (WDAIVLTAAS…SSQRVSLEEL (532 aa)) form a GDP-fucose pyrophosphorylase region. Residues 693-1055 (GKSHSENHIS…VKVYNWSICI (363 aa)) form an L-fucokinase region. 826–836 (PRGSGLGTSSI) is a binding site for ATP.

This sequence belongs to the GHMP kinase family. It depends on Mn(2+) as a cofactor. The cofactor is Mg(2+). As to expression, ubiquitous. Highest expression in flower buds.

It carries out the reaction L-fucose + ATP = beta-L-fucose 1-phosphate + ADP + H(+). The enzyme catalyses beta-L-fucose 1-phosphate + GTP + H(+) = GDP-beta-L-fucose + diphosphate. Functionally, bifunctional enzyme involved in the salvage pathway which converts free L-fucose to GDP-L-fucose. Catalyzes two successive reactions, the ATP-dependent phosphorylation of L-fucose to L-fucose 1-phosphate, and its guanylylation to GDP-L-fucose. The sugar-1-kinase activity has a strict substrate specificity for L-fucose and ATP. The pyrophosphorylase activity has a strict substrate specificity for L-fucose 1-phosphate and GTP. The polypeptide is Bifunctional fucokinase/GDP-fucose pyrophosphorylase (FKGP) (Arabidopsis thaliana (Mouse-ear cress)).